Here is a 396-residue protein sequence, read N- to C-terminus: UPF0046 protein T07D4.2 (396 aa).

The interval 73–94 (SRRGSIASGIPMDKKTRRKLSN) is disordered.

This sequence belongs to the UPF0046 family.

The chain is UPF0046 protein T07D4.2 from Caenorhabditis elegans.